A 497-amino-acid polypeptide reads, in one-letter code: Probable cytosol aminopeptidase (497 aa).

Mn(2+) is bound by residues K263 and D268. K275 is a catalytic residue. The Mn(2+) site is built by D286, D345, and E347. R349 is a catalytic residue.

The protein belongs to the peptidase M17 family. Requires Mn(2+) as cofactor.

Its subcellular location is the cytoplasm. The enzyme catalyses Release of an N-terminal amino acid, Xaa-|-Yaa-, in which Xaa is preferably Leu, but may be other amino acids including Pro although not Arg or Lys, and Yaa may be Pro. Amino acid amides and methyl esters are also readily hydrolyzed, but rates on arylamides are exceedingly low.. It carries out the reaction Release of an N-terminal amino acid, preferentially leucine, but not glutamic or aspartic acids.. Presumably involved in the processing and regular turnover of intracellular proteins. Catalyzes the removal of unsubstituted N-terminal amino acids from various peptides. This Agrobacterium fabrum (strain C58 / ATCC 33970) (Agrobacterium tumefaciens (strain C58)) protein is Probable cytosol aminopeptidase.